The primary structure comprises 120 residues: UPF0231 protein CKO_03249 (120 aa).

Belongs to the UPF0231 family.

In Citrobacter koseri (strain ATCC BAA-895 / CDC 4225-83 / SGSC4696), this protein is UPF0231 protein CKO_03249.